A 339-amino-acid polypeptide reads, in one-letter code: Starvation-sensing protein RspB (339 aa).

7 residues coordinate Zn(2+): Cys-37, His-59, Cys-89, Cys-92, Cys-95, Cys-103, and Glu-144.

This sequence belongs to the zinc-containing alcohol dehydrogenase family. The cofactor is Zn(2+).

In terms of biological role, not known; probable catabolic enzyme. In Escherichia coli (strain K12), this protein is Starvation-sensing protein RspB.